Consider the following 98-residue polypeptide: MVKVRVEFLGGLDVIVNKQRVYDLDVPSQVENVGDLIDYIIENLITNKKDVEVFIENDSIRPGIITLINDTDWELENEKEYVIEDGDVISFTSTLHGG.

G98 bears the 1-thioglycine mark. G98 participates in a covalent cross-link: Glycyl lysine isopeptide (Gly-Lys) (interchain with K-? in acceptor proteins).

The protein belongs to the URM1 family. Post-translationally, C-terminal thiocarboxylation occurs in 2 steps, it is first acyl-adenylated (-COAMP) via the hesA/moeB/thiF part of UBA4, then thiocarboxylated (-COSH) via the rhodanese domain of UBA4.

It is found in the cytoplasm. It functions in the pathway tRNA modification; 5-methoxycarbonylmethyl-2-thiouridine-tRNA biosynthesis. In terms of biological role, acts as a sulfur carrier required for 2-thiolation of mcm(5)S(2)U at tRNA wobble positions of cytosolic tRNA(Lys), tRNA(Glu) and tRNA(Gln). Serves as sulfur donor in tRNA 2-thiolation reaction by being thiocarboxylated (-COSH) at its C-terminus by the MOCS3 homolog UBA4. The sulfur is then transferred to tRNA to form 2-thiolation of mcm(5)S(2)U. Prior mcm(5) tRNA modification by the elongator complex is required for 2-thiolation. Also acts as a ubiquitin-like protein (UBL) that is covalently conjugated via an isopeptide bond to lysine residues of target proteins such as AHP1. The thiocarboxylated form serves as substrate for conjugation and oxidative stress specifically induces the formation of UBL-protein conjugates. This chain is Ubiquitin-related modifier 1, found in Candida glabrata (strain ATCC 2001 / BCRC 20586 / JCM 3761 / NBRC 0622 / NRRL Y-65 / CBS 138) (Yeast).